Reading from the N-terminus, the 206-residue chain is 2,3-bisphosphoglycerate-dependent phosphoglycerate mutase (206 aa).

Substrate-binding positions include 9–16 (RHGQSEWN), 22–23 (TG), R61, 88–91 (ERDY), K99, 115–116 (RR), and 159–160 (GN). The active-site Tele-phosphohistidine intermediate is the H10. The active-site Proton donor/acceptor is the E88.

Belongs to the phosphoglycerate mutase family. BPG-dependent PGAM subfamily. In terms of assembly, homodimer.

It carries out the reaction (2R)-2-phosphoglycerate = (2R)-3-phosphoglycerate. The protein operates within carbohydrate degradation; glycolysis; pyruvate from D-glyceraldehyde 3-phosphate: step 3/5. Its function is as follows. Catalyzes the interconversion of 2-phosphoglycerate and 3-phosphoglycerate. This chain is 2,3-bisphosphoglycerate-dependent phosphoglycerate mutase, found in Brucella melitensis biotype 2 (strain ATCC 23457).